The primary structure comprises 422 residues: Phosphoribosylamine--glycine ligase (422 aa).

The 206-residue stretch at 107 to 312 (KDVMAAAGVR…LGQLLHAAAT (206 aa)) folds into the ATP-grasp domain. 137–193 (GPPAGDPAWVVKDDRLAAGKGVVVTADRDVARAHGAALLEAGHPVLLESYLDGPEVS) is an ATP binding site. 2 residues coordinate Mg(2+): glutamate 282 and asparagine 284.

The protein belongs to the GARS family. Mg(2+) is required as a cofactor. The cofactor is Mn(2+).

The catalysed reaction is 5-phospho-beta-D-ribosylamine + glycine + ATP = N(1)-(5-phospho-beta-D-ribosyl)glycinamide + ADP + phosphate + H(+). The protein operates within purine metabolism; IMP biosynthesis via de novo pathway; N(1)-(5-phospho-D-ribosyl)glycinamide from 5-phospho-alpha-D-ribose 1-diphosphate: step 2/2. This chain is Phosphoribosylamine--glycine ligase, found in Mycobacterium bovis (strain ATCC BAA-935 / AF2122/97).